The following is a 404-amino-acid chain: Cysteine desulfurase IscS (404 aa).

Pyridoxal 5'-phosphate is bound by residues 75-76 (AT), N155, Q183, and 203-205 (SAH). The residue at position 206 (K206) is an N6-(pyridoxal phosphate)lysine. Residue T243 participates in pyridoxal 5'-phosphate binding. C328 functions as the Cysteine persulfide intermediate in the catalytic mechanism. Residue C328 coordinates [2Fe-2S] cluster.

It belongs to the class-V pyridoxal-phosphate-dependent aminotransferase family. NifS/IscS subfamily. As to quaternary structure, homodimer. Forms a heterotetramer with IscU, interacts with other sulfur acceptors. The cofactor is pyridoxal 5'-phosphate.

The protein resides in the cytoplasm. It carries out the reaction (sulfur carrier)-H + L-cysteine = (sulfur carrier)-SH + L-alanine. The protein operates within cofactor biosynthesis; iron-sulfur cluster biosynthesis. In terms of biological role, master enzyme that delivers sulfur to a number of partners involved in Fe-S cluster assembly, tRNA modification or cofactor biosynthesis. Catalyzes the removal of elemental sulfur atoms from cysteine to produce alanine. Functions as a sulfur delivery protein for Fe-S cluster synthesis onto IscU, an Fe-S scaffold assembly protein, as well as other S acceptor proteins. In Vibrio vulnificus (strain YJ016), this protein is Cysteine desulfurase IscS.